Here is a 201-residue protein sequence, read N- to C-terminus: MSRYTGPSWRISRRLGVSLSGTGKELNRRPYAPGDHGQGRRQKLSEYGTQLREKQKLRFTYGMTERQFYNLFKRAGKIKEGTHGTNFMILLERRLDNMVYRLGLATTRRQARQLVNHGHITVDGQRVDIPSYEVKIGQVISVREKSKDMAIIKGAVEAVVGRPQYVEFDADKLAGSLTRFPQREELDAELDDSLIVEYYNR.

The interval 21-43 is disordered; it reads GTGKELNRRPYAPGDHGQGRRQK. Residues 93–153 enclose the S4 RNA-binding domain; it reads RRLDNMVYRL…EKSKDMAIIK (61 aa).

The protein belongs to the universal ribosomal protein uS4 family. In terms of assembly, part of the 30S ribosomal subunit. Contacts protein S5. The interaction surface between S4 and S5 is involved in control of translational fidelity.

Functionally, one of the primary rRNA binding proteins, it binds directly to 16S rRNA where it nucleates assembly of the body of the 30S subunit. Its function is as follows. With S5 and S12 plays an important role in translational accuracy. In Levilactobacillus brevis (strain ATCC 367 / BCRC 12310 / CIP 105137 / JCM 1170 / LMG 11437 / NCIMB 947 / NCTC 947) (Lactobacillus brevis), this protein is Small ribosomal subunit protein uS4.